Consider the following 360-residue polypeptide: Mannose-1-phosphate guanylyltransferase catalytic subunit beta (360 aa).

Positions 2 to 222 (KALILVGGYG…QGFWMDIGQP (221 aa)) are substrate-binding domain. Residue Asp110 participates in GDP-alpha-D-mannose binding. Mg(2+) is bound at residue Asp110. Residue Lys162 is part of the active site. Asp218 lines the GDP-alpha-D-mannose pocket. The hexapeptide repeat domain stretch occupies residues 245-360 (YSGPGIVGNV…ESVPEPRIIM (116 aa)).

Belongs to the transferase hexapeptide repeat family. Component of the GMPPA-GMPPB mannose-1-phosphate guanylyltransferase complex composed of 4 GMPPA subunits and 8 GMPPB subunits; the complex is organized into three layers, a central layer made up of 2 GMPPA dimers sandwiched between two layers each made up of 2 GMPPB dimers. GMPPB catalytic activity is reduced when part of the complex and binding of GDP-alpha-D-Mannose by GMPPA induces allosteric feedback inhibition of GMPPB. Requires Mg(2+) as cofactor.

The protein localises to the cytoplasm. The enzyme catalyses alpha-D-mannose 1-phosphate + GTP + H(+) = GDP-alpha-D-mannose + diphosphate. Its pathway is nucleotide-sugar biosynthesis; GDP-alpha-D-mannose biosynthesis; GDP-alpha-D-mannose from alpha-D-mannose 1-phosphate (GTP route): step 1/1. Its activity is regulated as follows. Enzyme activity is reduced by incorporation into the GMPPA-GMPPB mannose-1-phosphate guanylyltransferase complex. Allosterically inhibited, when part of the GMPPA-GMPPB complex, by GDP-alpha-D-mannose binding to GMPPA. Its function is as follows. Catalytic subunit of the GMPPA-GMPPB mannose-1-phosphate guanylyltransferase complex. Catalyzes the formation of GDP-mannose, an essential precursor of glycan moieties of glycoproteins and glycolipids. Can catalyze the reverse reaction in vitro. Together with GMPPA regulates GDP-alpha-D-mannose levels. The polypeptide is Mannose-1-phosphate guanylyltransferase catalytic subunit beta (Mus musculus (Mouse)).